The primary structure comprises 255 residues: Ribonuclease HII (255 aa).

In terms of domain architecture, RNase H type-2 spans 73 to 255; it reads LYIGGIDEAG…HRKSFLKNIL (183 aa). A divalent metal cation-binding residues include D79, E80, and D171.

It belongs to the RNase HII family. Mn(2+) is required as a cofactor. It depends on Mg(2+) as a cofactor.

Its subcellular location is the cytoplasm. The enzyme catalyses Endonucleolytic cleavage to 5'-phosphomonoester.. Its function is as follows. Endonuclease that specifically degrades the RNA of RNA-DNA hybrids. This is Ribonuclease HII from Clostridioides difficile (strain 630) (Peptoclostridium difficile).